Reading from the N-terminus, the 319-residue chain is Probable cystathionine gamma-synthase (319 aa).

Lys-197 bears the N6-(pyridoxal phosphate)lysine mark.

This sequence belongs to the trans-sulfuration enzymes family. Homotetramer. Pyridoxal 5'-phosphate serves as cofactor.

Its subcellular location is the cytoplasm. The enzyme catalyses O-succinyl-L-homoserine + L-cysteine = L,L-cystathionine + succinate + H(+). Its function is as follows. Catalyzes the formation of L-cystathionine from O-succinyl-L-homoserine (OSHS) and L-cysteine, via a gamma-replacement reaction. In the absence of thiol, catalyzes gamma-elimination to form 2-oxobutanoate, succinate and ammonia. The chain is Probable cystathionine gamma-synthase (metB) from Herpetosiphon aurantiacus (Herpetosiphon giganteus).